The sequence spans 107 residues: Glutaredoxin 4 (107 aa).

The Glutaredoxin domain maps to 4–106 (LDKIKKQISE…TLLAEVAAKH (103 aa)). Residue lysine 21 coordinates glutathione. Residue cysteine 29 coordinates [2Fe-2S] cluster. Glutathione is bound by residues arginine 58, phenylalanine 70, and 83-84 (CD).

The protein belongs to the glutaredoxin family. Monothiol subfamily. As to quaternary structure, homodimer.

Its subcellular location is the cytoplasm. In terms of biological role, monothiol glutaredoxin involved in the biogenesis of iron-sulfur clusters. The protein is Glutaredoxin 4 (grxD) of Haemophilus influenzae (strain ATCC 51907 / DSM 11121 / KW20 / Rd).